Consider the following 645-residue polypeptide: Acetyl-coenzyme A synthetase (645 aa).

Residues 190 to 193 (RGGK) and Thr-308 each bind CoA. ATP-binding positions include 384–386 (GEP), 408–413 (DTWWQT), Asp-497, and Arg-512. Position 520 (Ser-520) interacts with CoA. An ATP-binding site is contributed by Arg-523. Residues Val-534, His-536, and Ile-539 each contribute to the Mg(2+) site. Lys-606 carries the N6-acetyllysine modification.

The protein belongs to the ATP-dependent AMP-binding enzyme family. Requires Mg(2+) as cofactor. Post-translationally, acetylated. Deacetylation by the SIR2-homolog deacetylase activates the enzyme.

The enzyme catalyses acetate + ATP + CoA = acetyl-CoA + AMP + diphosphate. Its function is as follows. Catalyzes the conversion of acetate into acetyl-CoA (AcCoA), an essential intermediate at the junction of anabolic and catabolic pathways. AcsA undergoes a two-step reaction. In the first half reaction, AcsA combines acetate with ATP to form acetyl-adenylate (AcAMP) intermediate. In the second half reaction, it can then transfer the acetyl group from AcAMP to the sulfhydryl group of CoA, forming the product AcCoA. This is Acetyl-coenzyme A synthetase from Alcanivorax borkumensis (strain ATCC 700651 / DSM 11573 / NCIMB 13689 / SK2).